The sequence spans 212 residues: Thymidylate kinase (212 aa).

7 to 14 (GGEGCGKT) contacts ATP.

This sequence belongs to the thymidylate kinase family.

The enzyme catalyses dTMP + ATP = dTDP + ADP. Phosphorylation of dTMP to form dTDP in both de novo and salvage pathways of dTTP synthesis. The polypeptide is Thymidylate kinase (Gloeobacter violaceus (strain ATCC 29082 / PCC 7421)).